The chain runs to 612 residues: Dihydroxy-acid dehydratase (612 aa).

Aspartate 81 contributes to the Mg(2+) binding site. Cysteine 122 is a [2Fe-2S] cluster binding site. 2 residues coordinate Mg(2+): aspartate 123 and lysine 124. Lysine 124 bears the N6-carboxylysine mark. [2Fe-2S] cluster is bound at residue cysteine 195. Glutamate 491 provides a ligand contact to Mg(2+). Serine 517 acts as the Proton acceptor in catalysis.

Belongs to the IlvD/Edd family. Homodimer. It depends on [2Fe-2S] cluster as a cofactor. Mg(2+) is required as a cofactor.

It carries out the reaction (2R)-2,3-dihydroxy-3-methylbutanoate = 3-methyl-2-oxobutanoate + H2O. It catalyses the reaction (2R,3R)-2,3-dihydroxy-3-methylpentanoate = (S)-3-methyl-2-oxopentanoate + H2O. Its pathway is amino-acid biosynthesis; L-isoleucine biosynthesis; L-isoleucine from 2-oxobutanoate: step 3/4. It functions in the pathway amino-acid biosynthesis; L-valine biosynthesis; L-valine from pyruvate: step 3/4. Functions in the biosynthesis of branched-chain amino acids. Catalyzes the dehydration of (2R,3R)-2,3-dihydroxy-3-methylpentanoate (2,3-dihydroxy-3-methylvalerate) into 2-oxo-3-methylpentanoate (2-oxo-3-methylvalerate) and of (2R)-2,3-dihydroxy-3-methylbutanoate (2,3-dihydroxyisovalerate) into 2-oxo-3-methylbutanoate (2-oxoisovalerate), the penultimate precursor to L-isoleucine and L-valine, respectively. This chain is Dihydroxy-acid dehydratase, found in Bartonella tribocorum (strain CIP 105476 / IBS 506).